The chain runs to 342 residues: Strictosidine synthase (342 aa).

The signal sequence occupies residues 1 to 20 (KLSDSQTMALFTVFLLFLSS). Asparagine 89 carries an N-linked (GlcNAc...) asparagine glycan.

This sequence belongs to the strictosidine synthase family. In terms of assembly, monomer.

The protein resides in the vacuole. It carries out the reaction 3alpha(S)-strictosidine + H2O = secologanin + tryptamine. It functions in the pathway alkaloid biosynthesis; 3alpha(S)-strictosidine biosynthesis; 3alpha(S)-strictosidine from secologanin and tryptamine: step 1/1. Functionally, catalyzes the stereospecific condensation of tryptamine with secologanin to form strictosidine, the key intermediate of indole alkaloid biosynthesis. This is Strictosidine synthase (STR1) from Rauvolfia mannii.